We begin with the raw amino-acid sequence, 432 residues long: Amino-acid acetyltransferase (432 aa).

An N-acetyltransferase domain is found at 286-425 (ESLREATIED…ASLYNYQRNS (140 aa)).

Belongs to the acetyltransferase family. ArgA subfamily.

The protein localises to the cytoplasm. The catalysed reaction is L-glutamate + acetyl-CoA = N-acetyl-L-glutamate + CoA + H(+). It functions in the pathway amino-acid biosynthesis; L-arginine biosynthesis; N(2)-acetyl-L-ornithine from L-glutamate: step 1/4. This chain is Amino-acid acetyltransferase, found in Ectopseudomonas mendocina (strain ymp) (Pseudomonas mendocina).